The primary structure comprises 227 residues: uncharacterized protein (227 aa).

4 consecutive transmembrane segments (helical) span residues 17 to 37 (VGIK…GVFS), 79 to 99 (GFLF…IISI), 112 to 132 (LMTP…LALI), and 181 to 201 (VAVF…ILVF).

The protein resides in the cell membrane. This is an uncharacterized protein from Escherichia coli (strain K12).